Consider the following 501-residue polypeptide: Protein DETOXIFICATION 37 (501 aa).

Helical transmembrane passes span M44–I64, L84–G104, V134–L154, V163–V183, S200–Y220, L222–V242, A280–L300, L310–A330, V352–W372, F396–G416, F422–L442, and I453–L473.

It belongs to the multi antimicrobial extrusion (MATE) (TC 2.A.66.1) family.

It is found in the membrane. This is Protein DETOXIFICATION 37 from Arabidopsis thaliana (Mouse-ear cress).